A 455-amino-acid chain; its full sequence is Fez family zinc finger protein 2 (455 aa).

The interval 1–22 is disordered; the sequence is MASSASLETMVPPACPRAGASP. Residues 27 to 42 carry the Engrailed homology 1 repressor motif; that stretch reads TLAFSIERIMAKTSEP. 6 C2H2-type zinc fingers span residues 272-294, 300-322, 328-350, 356-378, 384-406, and 412-435; these read FTCEVCGKVFNAHYNLTRHMPVH, FVCKVCGKGFRQASTLCRHKIIH, HKCNQCGKAFNRSSTLNTHIRIH, FVCEFCGKGFHQKGNYKNHKLTH, YKCTICNKAFHQVYNLTFHMHTH, and FTCATCGKGFCRNFDLKKHVRKLH.

It belongs to the krueppel C2H2-type zinc-finger protein family. In terms of tissue distribution, highly expressed in neocortical layer V, moderately expressed in layer VI. Expressed in subcortically projecting neurons.

The protein localises to the nucleus. In terms of biological role, transcription repressor. Required for the specification of corticospinal motor neurons and other subcerebral projection neurons. May play a role in layer and neuronal subtype-specific patterning of subcortical projections and axonal fasciculation. Controls the development of dendritic arborization and spines of large layer V pyramidal neurons. Plays a role in rostro-caudal patterning of the diencephalon and in prethalamic formation. The protein is Fez family zinc finger protein 2 (Fezf2) of Mus musculus (Mouse).